Reading from the N-terminus, the 540-residue chain is MAGPSNQTQPPPPVLTQPSLSFTQGLLVGQLSVVLLIGAFIKFFIFGEAPPHPSRNGLSNRTSSHRRSYSLNSISADSSPRTLREKPSTSNILRPVPSSSTNTRSILRKTYYSATPTNPTSKHSRSRPHHSSHQPESLDWFNVLIAQTIAQYRQTAYILKDSPTSSILASLSEALNNPEKKPSFIDSIKVTDISLGEEFPIFSNCRVIAVEDPNSDGGRLQALMDVDLSDDNLSLAVETSLLLNYPKPFSAVLPVALAVSVVRFSGTLCISFVPGPGTSDQTMSPSPSPPKEASAENIAVDHQSPERQSARQRAPHQHKYTNTNTAGATAAATADDNDTHAKLPHGIPKTSLAFSFLPDYRLDLSVRSLIGSRSRLQDVPKVAQLVEARVQAWFEERVVEPRVQVVGLPNIWPRMGRTGVRGSQEETEAGAGGSAPADIPGTAGGDGVGVRGGGGGGGGGGGVGGSGGGSMRGTSGWGMGYDGLRYRHNAHGDGGVGAGPGQSAGAALYGGAQGGGGGGGRGGEEQFAIPGSMPDPVVVT.

The Lumenal segment spans residues 1–25; the sequence is MAGPSNQTQPPPPVLTQPSLSFTQG. Residues 26 to 46 traverse the membrane as a helical segment; the sequence is LLVGQLSVVLLIGAFIKFFIF. Residues 47–540 lie on the Cytoplasmic side of the membrane; sequence GEAPPHPSRN…GSMPDPVVVT (494 aa). Disordered stretches follow at residues 52–135, 275–331, 416–471, and 509–540; these read HPSR…SHQP, GPGT…ATAA, GRTG…GGSM, and YGGA…VVVT. Composition is skewed to polar residues over residues 69 to 81, 88 to 105, and 112 to 121; these read YSLN…SSPR, STSN…NTRS, and YSATPTNPTS. Positions 122 to 132 are enriched in basic residues; the sequence is KHSRSRPHHSS. The SMP-LTD domain maps to 134–409; sequence QPESLDWFNV…EPRVQVVGLP (276 aa). The segment covering 321 to 331 has biased composition (low complexity); sequence TNTNTAGATAA. Gly residues-rich tracts occupy residues 442 to 471 and 511 to 521; these read TAGG…GGSM and GAQGGGGGGGR.

The protein belongs to the MMM1 family. As to quaternary structure, homodimer. Component of the ER-mitochondria encounter structure (ERMES) or MDM complex, composed of MMM1, MDM10, MDM12 and MDM34. An MMM1 homodimer associates with one molecule of MDM12 on each side in a pairwise head-to-tail manner, and the SMP-LTD domains of MMM1 and MDM12 generate a continuous hydrophobic tunnel for phospholipid trafficking.

The protein localises to the endoplasmic reticulum membrane. Functionally, component of the ERMES/MDM complex, which serves as a molecular tether to connect the endoplasmic reticulum (ER) and mitochondria. Components of this complex are involved in the control of mitochondrial shape and protein biogenesis, and function in nonvesicular lipid trafficking between the ER and mitochondria. The MDM12-MMM1 subcomplex functions in the major beta-barrel assembly pathway that is responsible for biogenesis of all outer membrane beta-barrel proteins, and acts in a late step after the SAM complex. The MDM10-MDM12-MMM1 subcomplex further acts in the TOM40-specific pathway after the action of the MDM12-MMM1 complex. Essential for establishing and maintaining the structure of mitochondria and maintenance of mtDNA nucleoids. This is Maintenance of mitochondrial morphology protein 1 from Blastomyces gilchristii (strain SLH14081) (Blastomyces dermatitidis).